Consider the following 395-residue polypeptide: Nucleoside diphosphate kinase homolog 7 (395 aa).

One can recognise a DM10 domain in the interval 22-110 (QSERFAFIAE…YTARQLGSRK (89 aa)).

It belongs to the NDK family. In terms of assembly, component of sperm flagellar doublet microtubules. Component of the gamma-tubulin ring complex.

It is found in the cytoplasm. The protein localises to the cytoskeleton. The protein resides in the microtubule organizing center. It localises to the centrosome. Its subcellular location is the nucleus. It is found in the spindle. The protein localises to the cilium axoneme. The protein resides in the flagellum axoneme. It localises to the cell projection. Its subcellular location is the cilium. Its function is as follows. Possesses an intrinsic kinase activity. Displays 3'-5' exonuclease activity with a preference for single-stranded DNA. Does not seem to have nucleoside diphosphate kinase activity. Functional component of the gamma-tubulin ring complex, implicated in the regulation of the microtubule-nucleating activity of the gamma-tubulin ring complex in centrosomes, in a kinase activity-dependent manner. Part of the dynein-decorated doublet microtubules (DMTs) in cilia axoneme, which is required for motile cilia beating. This Mus musculus (Mouse) protein is Nucleoside diphosphate kinase homolog 7.